The following is a 108-amino-acid chain: uncharacterized protein (108 aa).

The segment at 1–108 (MAKVTSEPQK…DKEQSETSVL (108 aa)) is disordered. Positions 26–56 (KGRKKGKTPRQRRSRSGVKGLKTTRKAKRPL) are enriched in basic residues. Positions 58–70 (GSSSQKAGETNTP) are enriched in polar residues. Over residues 73-92 (KPKKARGPILRGRYHRLKEK) the composition is skewed to basic residues. Residues 93-108 (MKKEEADKEQSETSVL) are compositionally biased toward basic and acidic residues.

This is an uncharacterized protein from Homo sapiens (Human).